Consider the following 318-residue polypeptide: Acyl-CoA dehydrogenase IpdE2 (318 aa).

FAD is bound by residues Arg-210 and Gly-277.

This sequence belongs to the acyl-CoA dehydrogenase family. In terms of assembly, heterotetramer composed of 2 IpdE1 subunits and 2 IpdE2 subunits. FAD serves as cofactor.

The enzyme catalyses 3-[(3aS,4S,5R,7aS)-5-hydroxy-7a-methyl-1-oxo-octahydro-1H-inden-4-yl]propanoyl-CoA + A = (2E)-3-[(3aS,4S,5R,7aS)-5-hydroxy-7a-methyl-1-oxo-octahydro-1H-inden-4-yl]prop-2-enoyl-CoA + AH2. The protein operates within steroid metabolism; cholesterol degradation. Functionally, involved in cholesterol degradation. Catalyzes the dehydrogenation of 5OH-HIP-CoA to 5OH-HIPE-CoA. Can also use octanoyl-CoA and dihydroferuloyl-CoA, with lower efficiency. Cannot use 3-oxo-4-pregnene-20-carboxyl-CoA (3-OPC-CoA). This is Acyl-CoA dehydrogenase IpdE2 from Mycobacterium tuberculosis (strain ATCC 25618 / H37Rv).